The sequence spans 117 residues: Large ribosomal subunit protein bL20c (117 aa).

The protein belongs to the bacterial ribosomal protein bL20 family.

Its subcellular location is the plastid. It is found in the chloroplast. Functionally, binds directly to 23S ribosomal RNA and is necessary for the in vitro assembly process of the 50S ribosomal subunit. It is not involved in the protein synthesizing functions of that subunit. The sequence is that of Large ribosomal subunit protein bL20c from Chloranthus spicatus (Chulantree).